The primary structure comprises 368 residues: Phosphoribosylformylglycinamidine cyclo-ligase (368 aa).

Belongs to the AIR synthase family.

The protein localises to the cytoplasm. It catalyses the reaction 2-formamido-N(1)-(5-O-phospho-beta-D-ribosyl)acetamidine + ATP = 5-amino-1-(5-phospho-beta-D-ribosyl)imidazole + ADP + phosphate + H(+). It participates in purine metabolism; IMP biosynthesis via de novo pathway; 5-amino-1-(5-phospho-D-ribosyl)imidazole from N(2)-formyl-N(1)-(5-phospho-D-ribosyl)glycinamide: step 2/2. The polypeptide is Phosphoribosylformylglycinamidine cyclo-ligase (Chelativorans sp. (strain BNC1)).